The primary structure comprises 183 residues: Protein jagunal homolog 1-B (183 aa).

The Cytoplasmic portion of the chain corresponds to 1–39 (MASRAGPRATGTDGSDYQHRERVASHYQMSVALKSEIKK). Residues 40 to 60 (LNIAHAVVWFLVAAQVLVSQL) traverse the membrane as a helical segment. Topologically, residues 61–71 (NLVSHKVVASP) are lumenal. The helical transmembrane segment at 72-92 (YQWEYTYLLSIIPTVFSFMAL) threads the bilayer. Topologically, residues 93–99 (PKNNISY) are cytoplasmic. A helical transmembrane segment spans residues 100–120 (LVISMISGGLFCIGPILYGGM). The Lumenal portion of the chain corresponds to 121–137 (EMFPVAQQLYRHGKAYR). The helical transmembrane segment at 138 to 158 (FIFGFSAVSIMYLVLIISVQV) threads the bilayer. Topologically, residues 159–183 (HGWQIYYSKKLLDAWFTNTQDKKKK) are cytoplasmic.

The protein belongs to the jagunal family.

It is found in the endoplasmic reticulum membrane. Endoplasmic reticulum transmembrane protein involved in vesicle-mediated transport, which is required for neutrophil function. The chain is Protein jagunal homolog 1-B (jagn1b) from Danio rerio (Zebrafish).